The chain runs to 259 residues: Diphthine synthase (259 aa).

Residues L9, D85, V88, 113–114 (TA), L168, A209, and H234 each bind S-adenosyl-L-methionine.

This sequence belongs to the diphthine synthase family. As to quaternary structure, homodimer.

It carries out the reaction 2-[(3S)-amino-3-carboxypropyl]-L-histidyl-[translation elongation factor 2] + 3 S-adenosyl-L-methionine = diphthine-[translation elongation factor 2] + 3 S-adenosyl-L-homocysteine + 3 H(+). Its pathway is protein modification; peptidyl-diphthamide biosynthesis. Functionally, S-adenosyl-L-methionine-dependent methyltransferase that catalyzes the trimethylation of the amino group of the modified target histidine residue in translation elongation factor 2 (EF-2), to form an intermediate called diphthine. The three successive methylation reactions represent the second step of diphthamide biosynthesis. This chain is Diphthine synthase, found in Haloarcula marismortui (strain ATCC 43049 / DSM 3752 / JCM 8966 / VKM B-1809) (Halobacterium marismortui).